The following is a 487-amino-acid chain: N-succinylglutamate 5-semialdehyde dehydrogenase (487 aa).

Gly-221–Gly-226 is a binding site for NAD(+). Residues Glu-244 and Cys-278 contribute to the active site.

It belongs to the aldehyde dehydrogenase family. AstD subfamily.

The catalysed reaction is N-succinyl-L-glutamate 5-semialdehyde + NAD(+) + H2O = N-succinyl-L-glutamate + NADH + 2 H(+). It participates in amino-acid degradation; L-arginine degradation via AST pathway; L-glutamate and succinate from L-arginine: step 4/5. Its function is as follows. Catalyzes the NAD-dependent reduction of succinylglutamate semialdehyde into succinylglutamate. This is N-succinylglutamate 5-semialdehyde dehydrogenase from Burkholderia ambifaria (strain MC40-6).